Here is a 204-residue protein sequence, read N- to C-terminus: Proteasome subunit beta type-3 (204 aa).

It belongs to the peptidase T1B family. In terms of assembly, the 26S proteasome consists of a 20S proteasome core and two 19S regulatory subunits. The 20S proteasome core is composed of 28 subunits that are arranged in four stacked rings, resulting in a barrel-shaped structure. The two end rings are each formed by seven alpha subunits, and the two central rings are each formed by seven beta subunits. The catalytic chamber with the active sites is on the inside of the barrel.

Its subcellular location is the cytoplasm. The protein resides in the nucleus. Its function is as follows. Non-catalytic component of the proteasome, a multicatalytic proteinase complex which is characterized by its ability to cleave peptides with Arg, Phe, Tyr, Leu, and Glu adjacent to the leaving group at neutral or slightly basic pH. The proteasome has an ATP-dependent proteolytic activity. In Caenorhabditis elegans, this protein is Proteasome subunit beta type-3 (pbs-3).